The chain runs to 940 residues: UvrABC system protein A (940 aa).

31 to 38 serves as a coordination point for ATP; that stretch reads GLSGSGKS. The C4-type zinc-finger motif lies at 253–280; that stretch reads CPICGYSMRELEPRLFSFNNPAGACPTC. 2 ABC transporter domains span residues 310 to 587 and 607 to 937; these read WDRR…PESL and ANPE…RFLK. An ATP-binding site is contributed by 640 to 647; the sequence is GVSGSGKS. The C4-type zinc finger occupies 740–766; sequence CEACQGDGVIKVEMHFLPDIYVPCDQC.

This sequence belongs to the ABC transporter superfamily. UvrA family. In terms of assembly, forms a heterotetramer with UvrB during the search for lesions.

The protein resides in the cytoplasm. The UvrABC repair system catalyzes the recognition and processing of DNA lesions. UvrA is an ATPase and a DNA-binding protein. A damage recognition complex composed of 2 UvrA and 2 UvrB subunits scans DNA for abnormalities. When the presence of a lesion has been verified by UvrB, the UvrA molecules dissociate. Functionally, plays a role in recovery after DNA ADP-ribosylation. In Escherichia coli O127:H6 (strain E2348/69 / EPEC), this protein is UvrABC system protein A.